Reading from the N-terminus, the 123-residue chain is Probable U6 snRNA-associated Sm-like protein LSm4 (123 aa).

Residues 3–76 (LPLSLLKTAQ…IKYLRIPETV (74 aa)) enclose the Sm domain. A compositionally biased stretch (basic and acidic residues) spans 85-97 (NEVRRQQQREQSR). Residues 85 to 123 (NEVRRQQQREQSRGRGGGRGGRGGHRGGGGNRGGRGGAR) are disordered. The span at 98–123 (GRGGGRGGRGGHRGGGGNRGGRGGAR) shows a compositional bias: gly residues.

The protein belongs to the snRNP Sm proteins family. In terms of assembly, component of the precatalytic spliceosome (spliceosome B complex). Component of the U4/U6-U5 tri-snRNP complex, a building block of the precatalytic spliceosome (spliceosome B complex). LSM2, LSM3, LSM4, LSM5, LSM6, LSM7 and LSM8 form a heptameric, ring-shaped subcomplex (the LSM2-8 complex) that is part of the U4/U6-U5 tri-snRNP complex and the precatalytic spliceosome.

It localises to the nucleus. Plays a role in pre-mRNA splicing as component of the U4/U6-U5 tri-snRNP complex that is involved in spliceosome assembly, and as component of the precatalytic spliceosome (spliceosome B complex). The heptameric LSM2-8 complex binds specifically to the 3'-terminal U-tract of U6 snRNA. The chain is Probable U6 snRNA-associated Sm-like protein LSm4 (lsm-4) from Caenorhabditis elegans.